The sequence spans 402 residues: CCA-adding enzyme (402 aa).

2 residues coordinate ATP: Gly32 and Arg35. Positions 32 and 35 each coordinate CTP. The Mg(2+) site is built by Asp45 and Asp47. Arg116, Asp159, Arg162, Arg165, and Arg168 together coordinate ATP. CTP contacts are provided by Arg116, Asp159, Arg162, Arg165, and Arg168.

This sequence belongs to the tRNA nucleotidyltransferase/poly(A) polymerase family. Bacterial CCA-adding enzyme type 3 subfamily. As to quaternary structure, homodimer. The cofactor is Mg(2+).

It catalyses the reaction a tRNA precursor + 2 CTP + ATP = a tRNA with a 3' CCA end + 3 diphosphate. The catalysed reaction is a tRNA with a 3' CCA end + 2 CTP + ATP = a tRNA with a 3' CCACCA end + 3 diphosphate. In terms of biological role, catalyzes the addition and repair of the essential 3'-terminal CCA sequence in tRNAs without using a nucleic acid template. Adds these three nucleotides in the order of C, C, and A to the tRNA nucleotide-73, using CTP and ATP as substrates and producing inorganic pyrophosphate. tRNA 3'-terminal CCA addition is required both for tRNA processing and repair. Also involved in tRNA surveillance by mediating tandem CCA addition to generate a CCACCA at the 3' terminus of unstable tRNAs. While stable tRNAs receive only 3'-terminal CCA, unstable tRNAs are marked with CCACCA and rapidly degraded. The protein is CCA-adding enzyme of Streptococcus pyogenes serotype M3 (strain ATCC BAA-595 / MGAS315).